The primary structure comprises 319 residues: Coproporphyrin III ferrochelatase 2 (319 aa).

Fe-coproporphyrin III-binding positions include tyrosine 13, arginine 30, 46–47 (RY), serine 54, and tyrosine 125. Fe(2+) is bound by residues histidine 181 and glutamate 262.

The protein belongs to the ferrochelatase family.

It localises to the cytoplasm. It catalyses the reaction Fe-coproporphyrin III + 2 H(+) = coproporphyrin III + Fe(2+). It participates in porphyrin-containing compound metabolism; protoheme biosynthesis. Its function is as follows. Involved in coproporphyrin-dependent heme b biosynthesis. Catalyzes the insertion of ferrous iron into coproporphyrin III to form Fe-coproporphyrin III. This chain is Coproporphyrin III ferrochelatase 2, found in Bacillus cereus (strain ZK / E33L).